Reading from the N-terminus, the 340-residue chain is GTP 3',8-cyclase (340 aa).

The Radical SAM core domain occupies R20–K246. R29 contacts GTP. 2 residues coordinate [4Fe-4S] cluster: C36 and C40. Residue Y42 participates in S-adenosyl-L-methionine binding. C43 contacts [4Fe-4S] cluster. R79 is a GTP binding site. G83 is a binding site for S-adenosyl-L-methionine. GTP is bound at residue T110. S134 contacts S-adenosyl-L-methionine. K171 contacts GTP. M205 provides a ligand contact to S-adenosyl-L-methionine. Residues C268 and C271 each coordinate [4Fe-4S] cluster. R273–R275 provides a ligand contact to GTP. Residue C285 coordinates [4Fe-4S] cluster.

This sequence belongs to the radical SAM superfamily. MoaA family. In terms of assembly, monomer and homodimer. It depends on [4Fe-4S] cluster as a cofactor.

The catalysed reaction is GTP + AH2 + S-adenosyl-L-methionine = (8S)-3',8-cyclo-7,8-dihydroguanosine 5'-triphosphate + 5'-deoxyadenosine + L-methionine + A + H(+). It participates in cofactor biosynthesis; molybdopterin biosynthesis. Functionally, catalyzes the cyclization of GTP to (8S)-3',8-cyclo-7,8-dihydroguanosine 5'-triphosphate. The sequence is that of GTP 3',8-cyclase from Actinobacillus pleuropneumoniae serotype 5b (strain L20).